The sequence spans 269 residues: 4-hydroxy-tetrahydrodipicolinate reductase (269 aa).

Residues Gly8–Met13, Gly98–Thr100, and Ala122–Met125 contribute to the NAD(+) site. Catalysis depends on His156, which acts as the Proton donor/acceptor. His157 contacts (S)-2,3,4,5-tetrahydrodipicolinate. Residue Lys160 is the Proton donor of the active site. Residue Gly166–Thr167 participates in (S)-2,3,4,5-tetrahydrodipicolinate binding.

Belongs to the DapB family.

The protein resides in the cytoplasm. The enzyme catalyses (S)-2,3,4,5-tetrahydrodipicolinate + NAD(+) + H2O = (2S,4S)-4-hydroxy-2,3,4,5-tetrahydrodipicolinate + NADH + H(+). It carries out the reaction (S)-2,3,4,5-tetrahydrodipicolinate + NADP(+) + H2O = (2S,4S)-4-hydroxy-2,3,4,5-tetrahydrodipicolinate + NADPH + H(+). It participates in amino-acid biosynthesis; L-lysine biosynthesis via DAP pathway; (S)-tetrahydrodipicolinate from L-aspartate: step 4/4. Catalyzes the conversion of 4-hydroxy-tetrahydrodipicolinate (HTPA) to tetrahydrodipicolinate. In Chromohalobacter salexigens (strain ATCC BAA-138 / DSM 3043 / CIP 106854 / NCIMB 13768 / 1H11), this protein is 4-hydroxy-tetrahydrodipicolinate reductase.